Consider the following 308-residue polypeptide: Alternaria stem canker resistance protein 1 (308 aa).

6 consecutive transmembrane segments (helical) span residues 21-41, 82-102, 128-148, 165-185, 213-233, and 254-274; these read YQDLIFLLFFALFFPVLRFIL, FVYFLSTELLALSVTCNEPWF, LLYMYAGGFYFYSIFATLYWE, VSLIVLSYVYGFARIGSVVLA, FSLFALVFTSLRIICYPFWII, and IILYFVFNALLICLLVLHLFW. A TLC domain is found at 73–287; it reads NKFKESAWKF…ILRMVKNQIL (215 aa).

The protein resides in the endoplasmic reticulum membrane. Mediates resistance to sphinganine-analog mycotoxins (SAMs) by restoring the sphingolipid biosynthesis. Could salvage the transport of GPI-anchored proteins from the endoplasmic reticulum to the Golgi apparatus in ceramides-depleted cells after SAM exposure. This Solanum lycopersicum (Tomato) protein is Alternaria stem canker resistance protein 1.